A 586-amino-acid chain; its full sequence is Asparagine synthetase, nodule [glutamine-hydrolyzing] (586 aa).

Cysteine 2 serves as the catalytic For GATase activity. The Glutamine amidotransferase type-2 domain occupies 2–185 (CGILAVLGCS…PGHLYSSKER (184 aa)). L-glutamine-binding positions include 50–54 (RLAIV), 75–77 (NGE), and aspartate 98. Positions 193–517 (PPWFNEAIIP…PQNSARLTVP (325 aa)) constitute an Asparagine synthetase domain. ATP is bound by residues leucine 232, valine 268, and 342-343 (SG).

As to expression, root nodules.

The enzyme catalyses L-aspartate + L-glutamine + ATP + H2O = L-asparagine + L-glutamate + AMP + diphosphate + H(+). It participates in amino-acid biosynthesis; L-asparagine biosynthesis; L-asparagine from L-aspartate (L-Gln route): step 1/1. In Pisum sativum (Garden pea), this protein is Asparagine synthetase, nodule [glutamine-hydrolyzing] (AS1).